Consider the following 185-residue polypeptide: Elongation factor P (185 aa).

It belongs to the elongation factor P family.

It is found in the cytoplasm. It participates in protein biosynthesis; polypeptide chain elongation. Its function is as follows. Involved in peptide bond synthesis. Stimulates efficient translation and peptide-bond synthesis on native or reconstituted 70S ribosomes in vitro. Probably functions indirectly by altering the affinity of the ribosome for aminoacyl-tRNA, thus increasing their reactivity as acceptors for peptidyl transferase. This chain is Elongation factor P, found in Carboxydothermus hydrogenoformans (strain ATCC BAA-161 / DSM 6008 / Z-2901).